The following is a 126-amino-acid chain: Large ribosomal subunit protein bL17 (126 aa).

This sequence belongs to the bacterial ribosomal protein bL17 family. As to quaternary structure, part of the 50S ribosomal subunit. Contacts protein L32.

The chain is Large ribosomal subunit protein bL17 from Vibrio atlanticus (strain LGP32) (Vibrio splendidus (strain Mel32)).